We begin with the raw amino-acid sequence, 340 residues long: Protein pelota homolog (340 aa).

Belongs to the eukaryotic release factor 1 family. Pelota subfamily. As to quaternary structure, monomer. It depends on a divalent metal cation as a cofactor.

The protein resides in the cytoplasm. May function in recognizing stalled ribosomes, interact with stem-loop structures in stalled mRNA molecules, and effect endonucleolytic cleavage of the mRNA. May play a role in the release non-functional ribosomes and degradation of damaged mRNAs. Has endoribonuclease activity. In Methanosphaerula palustris (strain ATCC BAA-1556 / DSM 19958 / E1-9c), this protein is Protein pelota homolog.